A 448-amino-acid polypeptide reads, in one-letter code: StAR-related lipid transfer protein 3 (448 aa).

The MENTAL domain occupies 47-219; it reads FSDVRRTFCL…YSPPESLAGS (173 aa). The next 4 helical transmembrane spans lie at 53–73, 96–116, 122–142, and 150–170; these read TFCL…IIEL, FFDI…GYAA, WWVI…KVIL, and AFGY…TWFL. The FFAT motif lies at 208–214; sequence QFYSPPE. The region spanning 232 to 445 is the START domain; that stretch reads AVTEQEKAFV…LRQRINEVHV (214 aa).

It belongs to the STARD3 family. As to quaternary structure, homodimer. Phosphorylated. Phosphorylation allows the tethering of two membranes that participates in the formation of ER-endosome contacts. Phosphorylation of FFAT motif drives membrane tethering between the endoplasmic reticulum and late endosomes that in turn allows the efficient transport of sterol mediated by the START domain.

It localises to the late endosome membrane. It catalyses the reaction cholesterol(in) = cholesterol(out). Its function is as follows. Sterol-binding protein that mediates cholesterol transport from the endoplasmic reticulum to endosomes. The sterol transport mechanism is triggered by phosphorylation of FFAT motif that leads to membrane tethering between the endoplasmic reticulum and late endosomes. Acts as a lipid transfer protein that redirects sterol to the endosome at the expense of the cell membrane and favors membrane formation inside endosomes. The chain is StAR-related lipid transfer protein 3 from Danio rerio (Zebrafish).